An 83-amino-acid chain; its full sequence is U-actitoxin-Aeq6b (83 aa).

An N-terminal signal peptide occupies residues 1–20; sequence MIYKAVFVCLVLVLLGDVFC. Positions 21 to 36 are excised as a propeptide; the sequence is SPRNSGGGTLNDNPFE. Pro82 carries the proline amide modification.

Post-translationally, contains 3 disulfide bonds. As to expression, expressed by acrorhagi.

It localises to the secreted. The protein localises to the nematocyst. Its function is as follows. Toxin. This chain is U-actitoxin-Aeq6b, found in Actinia equina (Beadlet anemone).